A 116-amino-acid chain; its full sequence is Ribosome-binding factor A (116 aa).

This sequence belongs to the RbfA family. Monomer. Binds 30S ribosomal subunits, but not 50S ribosomal subunits or 70S ribosomes.

It localises to the cytoplasm. One of several proteins that assist in the late maturation steps of the functional core of the 30S ribosomal subunit. Associates with free 30S ribosomal subunits (but not with 30S subunits that are part of 70S ribosomes or polysomes). Required for efficient processing of 16S rRNA. May interact with the 5'-terminal helix region of 16S rRNA. This Clostridium botulinum (strain Eklund 17B / Type B) protein is Ribosome-binding factor A.